A 362-amino-acid chain; its full sequence is Shewanella-like protein phosphatase 1 (362 aa).

The N-terminal stretch at 1–23 (MIFKKALYILLFLYIAIVKKGES) is a signal peptide. D65, H67, D101, and N136 together coordinate Mn(2+). H137 (proton donor) is an active-site residue. Position 196 (H196) interacts with Mn(2+).

It belongs to the metallophosphoesterase superfamily. SLP family. Mn(2+) serves as cofactor.

Its function is as follows. Phosphatase which plays an essential role in the development and differentiation of the ookinete and in the formation of ookinete micronemes. The sequence is that of Shewanella-like protein phosphatase 1 from Plasmodium berghei (strain Anka).